The sequence spans 948 residues: ATPase 2, plasma membrane-type (948 aa).

Ser2 bears the N-acetylserine mark. Residues 2 to 61 (SSLEDIKNETVDLEKIPIEEVFQQLKCSREGLTTQEGEDRIQIFGPNKLEEKKESKLLKF) lie on the Cytoplasmic side of the membrane. A helical transmembrane segment spans residues 62 to 81 (LGFMWNPLSWVMEMAAIMAI). Residues 82–93 (ALANGDGRPPDW) are Extracellular-facing. A helical membrane pass occupies residues 94–114 (QDFVGIICLLVINSTISFIEE). The Cytoplasmic segment spans residues 115–243 (NNAGNAAAAL…GHFQKVLTAI (129 aa)). The chain crosses the membrane as a helical span at residues 244–264 (GNFCICSIAIGMVIEIIVMYP). Residues 265–273 (IQRRKYRDG) are Extracellular-facing. Residues 274-291 (IDNLLVLLIGGIPIAMPT) traverse the membrane as a helical segment. Residues 292–643 (VLSVTMAIGS…TSRAIFQRMK (352 aa)) are Cytoplasmic-facing. The active-site 4-aspartylphosphate intermediate is the Asp329. Mg(2+)-binding residues include Asp588 and Asp592. A helical transmembrane segment spans residues 644-665 (NYTIYAVSITIRIVFGFMLIAL). At 666 to 670 (IWEFD) the chain is on the extracellular side. The chain crosses the membrane as a helical span at residues 671–693 (FSAFMVLIIAILNDGTIMTISKD). Over 694–709 (RVKPSPTPDSWKLKEI) the chain is Cytoplasmic. The chain crosses the membrane as a helical span at residues 710–730 (FATGVVLGGYQAIMTVIFFWA). The Extracellular portion of the chain corresponds to 731–751 (AHKTDFFSDTFGVRSIRDNNH). Residues 752–772 (ELMGAVYLQVSIISQALIFVT) traverse the membrane as a helical segment. Residues 773 to 784 (RSRSWSFVERPG) lie on the Cytoplasmic side of the membrane. Residues 785-805 (ALLMIAFLIAQLIATLIAVYA) traverse the membrane as a helical segment. Residues 806 to 813 (NWEFAKIR) are Extracellular-facing. Residues 814-834 (GIGWGWAGVIWLYSIVTYFPL) form a helical membrane-spanning segment. Over 835–948 (DVFKFAIRYI…DIETPSHYTV (114 aa)) the chain is Cytoplasmic. Residue Thr881 is modified to Phosphothreonine. The residue at position 899 (Ser899) is a Phosphoserine. Ser931 carries the phosphoserine; by CIPK11 modification. Residues 946–948 (YTV) form an interaction with 14-3-3 proteins region. Thr947 carries the phosphothreonine modification.

The protein belongs to the cation transport ATPase (P-type) (TC 3.A.3) family. Type IIIA subfamily. In terms of assembly, binds to 14-3-3 proteins. The binding is induced by phosphorylation of Thr-947 and it activates the H(+)-ATPase. Interacts (via the R-domain) with PSY1R (via C-terminus). Part of a functional complex containing PSKR1, BAK1, CNGC17, and AHA. Interacts with CNGC17 and PSKR1. Interacts with PP2C67/PP2C-D1 at the plasma membrane. Interacts with AHA1. Phosphorylated, probably by PHOT1 and PHOT2, at C-terminal Thr-947 in guard cells in response to blue light to induce stomatal opening. In terms of processing, phosphorylation at Thr-881 by PSY1R. This phosphorylation activates proton pumping. Decreased phosphorylation in response to flg22 elicitation. Post-translationally, phosphorylation at Ser-899 is specifically induced by RALF1, thus leading to the inhibition of proton transport. Increased phosphorylation in response to flg22 elicitation. Phosphorylation of Thr-947 induces the binding to 14-3-3 proteins, but phosphorylation of Ser-931 interferes with this binding no matter whether Thr-947 is phosphorylated or not. Decreased phosphorylation in response to flg22 elicitation. Phosphorylation of Thr-947 is enhanced by the presence of brassinolide (BL) via the BRI1-BIN2 pathway and prior the trigger of hypocotyl elongation. Inactivated by PP2C67/PP2C-D1-mediated Thr-947 dephosphorylation; SAUR19 inhibits the action of PP2C67/PP2C-D1 and thus promotes the active phosphorylated form. In terms of processing, abscisic acid induces dephosphorylation of AHA2 in etiolated seedlings, suppressing ATP hydrolysis and hypocotyl elongation. Higher levels in roots than in shoots. Expressed in epidermal and root cortex cells, in phloem, xylem and root hairs. Detected in cotyledons, leaves, hypocotyls, roots and root hairs. Expressed in guard cells and mesophyll cells.

Its subcellular location is the cell membrane. The enzyme catalyses ATP + H2O + H(+)(in) = ADP + phosphate + 2 H(+)(out). Its activity is regulated as follows. Regulated by an auto-inhibitory C-terminal domain that can be displaced by phosphorylation of Thr-947 and the subsequent binding of 14-3-3 proteins. Negatively regulated by PKS5. PKS5 phosphorylates Ser-931, inhibiting interaction with the activating 14-3-3 protein. Positively regulated by PSY1R. PSY1R phosphorylates Thr-881, situated in the auto-inhibitory region I of the C-terminal domain, causing pump activation. Negatively regulated by the secreted peptide RALF. After specific binding to FERONIA, RALF causes phosphorylation at Ser-899, mediating the inhibition of proton transport. Activated by lysophospholipids, without the involvement of phosphorylation of Thr-947. This activation is critically dependent on the single autoinhibitory residue Leu-919. Repressed by PP2C-D phosphatases (e.g. PP2C67/PP2C-D1 and PP2C64/PP2C-D5) which dephosphorylates Thr-947. Triggered by SAUR19 via phosphorylation of the C-terminal autoinhibitory domain (e.g. Thr-947), as a result of the inhibition of PP2C67/PP2C-D1. Phosphorylation on Thr residues is repressed by tyrphostin 9, sphingosine, GW5074 and BML-265. By contrast, the fungal phytotoxin fusicoccin (FC) promotes phosphorylation of Thr-947 independently to BHP, thus leading to large stomatal opening. In terms of biological role, the plasma membrane H(+) ATPase of plants and fungi generates a proton gradient that drives the active transport of nutrients by H(+)-symport. The resulting external acidification and/or internal alkinization may mediate growth responses. Involved in maintaining the membrane potential and delta-pH, together forming the plasma membrane protonmotive force (PMF) required for root and hypocotyl elongation and root tropism. Important for root growth and development during different nitrogen regimes. Forms a functional cation-translocating unit with CNGC17 that is activated by PSKR1/BAK1 and possibly other BAK1/RLK complexes. Promotes stomatal opening in response to blue light. In Arabidopsis thaliana (Mouse-ear cress), this protein is ATPase 2, plasma membrane-type.